Here is a 151-residue protein sequence, read N- to C-terminus: 18 kDa heat shock protein (151 aa).

The sHSP domain occupies 38-151 (TFNGNAGFKV…KDNGRRIDIH (114 aa)).

It belongs to the small heat shock protein (HSP20) family.

In terms of biological role, probable chaperone. This is 18 kDa heat shock protein (hsp18) from Clostridium acetobutylicum (strain ATCC 824 / DSM 792 / JCM 1419 / IAM 19013 / LMG 5710 / NBRC 13948 / NRRL B-527 / VKM B-1787 / 2291 / W).